A 350-amino-acid chain; its full sequence is MKVLRVNLDEKSYDIVIQKDLKDYFGEYIKTVFDGKKVAIITDDNLNDIYGEAIKKNIENEGFEVEVISVTPGEKSKSFSVLPGIYNKLLDFKLTRSDLIIALGGGVVGDLAGFVASTFLRGISFIQIPTSLLAQVDSSVGGKVAVDLERGKNLVGSFYHPELVLIDPNMLGTLPEKYFNDGLGEVIKYGCIKSKELFEKLEGFENKEDLKENIGEIIYECCNIKREVVENDEKDLGERMVLNFGHTLGHAIEQIYNYEIYSHGEAVAIGMNMISKIAEEKDLTKKGTAERIESLLKKYGLNTDVNIEDNGLAREAIKLDKKNLNGNLNVILLKDIGEGYIYNTTVEFFE.

Residues 106–110, 130–131, Lys-143, and Lys-152 each bind NAD(+); these read GVVGD and TS. Zn(2+) contacts are provided by Glu-185, His-246, and His-263.

This sequence belongs to the sugar phosphate cyclases superfamily. Dehydroquinate synthase family. The cofactor is NAD(+). Co(2+) is required as a cofactor. It depends on Zn(2+) as a cofactor.

It localises to the cytoplasm. The catalysed reaction is 7-phospho-2-dehydro-3-deoxy-D-arabino-heptonate = 3-dehydroquinate + phosphate. The protein operates within metabolic intermediate biosynthesis; chorismate biosynthesis; chorismate from D-erythrose 4-phosphate and phosphoenolpyruvate: step 2/7. Its function is as follows. Catalyzes the conversion of 3-deoxy-D-arabino-heptulosonate 7-phosphate (DAHP) to dehydroquinate (DHQ). This is 3-dehydroquinate synthase from Clostridium perfringens (strain 13 / Type A).